An 83-amino-acid polypeptide reads, in one-letter code: Neurotoxin-1'' (83 aa).

Positions 1-19 (MNYLVMISLALLLMIGVES) are cleaved as a signal peptide. The LCN-type CS-alpha/beta domain occupies 21–82 (RDGYIVYPNN…PIKDTSRKCT (62 aa)). 4 disulfides stabilise this stretch: Cys31/Cys81, Cys35/Cys53, Cys39/Cys63, and Cys43/Cys65. Residue Arg83 is a propeptide, removed by a carboxypeptidase (in neurotoxin-1/1').

The protein belongs to the long (4 C-C) scorpion toxin superfamily. Sodium channel inhibitor family. Alpha subfamily. In terms of tissue distribution, expressed by the venom gland.

It localises to the secreted. Its function is as follows. Alpha toxins bind voltage-independently at site-3 of sodium channels (Nav) and inhibit the inactivation of the activated channels, thereby blocking neuronal transmission. Is active against mammals and binds with high affinity rat brain synaptosomes. The sequence is that of Neurotoxin-1'' from Androctonus australis (Sahara scorpion).